Reading from the N-terminus, the 569-residue chain is F-box-like/WD repeat-containing protein TBL1X (569 aa).

Residues 55–87 (TSDEVNFLVYRYLQESGFSHSAFTFGIESHISQ) form the LisH domain. The F-box-like domain maps to 92-137 (GTLVPPAALISILQKGLQYVEAEISINEDGTVFDGRPIESLSLIDA). Lys153 carries the N6-acetyllysine modification. The tract at residues 170 to 195 (TSASVSQQNPSKNREATVNGEENRAH) is disordered. Ser175 is modified (phosphoserine). WD repeat units follow at residues 222–261 (GHES…NGGS), 278–317 (PSNK…ASTL), 319–358 (QHKG…AKQQ), 361–401 (FHSA…KTFQ), 402–441 (GHTN…CIHD), 444–492 (AHNK…CTHT), 495–534 (KHQE…LVHS), and 536–568 (RGTG…LDLR). Lys332 participates in a covalent cross-link: Glycyl lysine isopeptide (Lys-Gly) (interchain with G-Cter in SUMO2).

This sequence belongs to the WD repeat EBI family. As to quaternary structure, homotetramer; dimer of dimers. Component of the N-Cor repressor complex, at least composed of NCOR1, NCOR2, HDAC3, TBL1X, TBL1R, CORO2A and GPS2. Interacts with GPS2 (when sumoylated); leading to protect GPS2 against degradation by the proteasome. Component of a E3 ubiquitin ligase complex containing UBE2D1, SIAH1, CACYBP/SIP, SKP1, APC and TBL1X. Probably part of other corepressor complexes, that do not contain NCOR1 and NCOR2. Interacts with histones H2B, H3a and H4. Interacts with MECP2; recruits TBL1X to the heterochromatin foci. Interacts with USP44.

The protein localises to the nucleus. F-box-like protein involved in the recruitment of the ubiquitin/19S proteasome complex to nuclear receptor-regulated transcription units. Plays an essential role in transcription activation mediated by nuclear receptors. Probably acts as integral component of corepressor complexes that mediates the recruitment of the 19S proteasome complex, leading to the subsequent proteasomal degradation of transcription repressor complexes, thereby allowing cofactor exchange. The chain is F-box-like/WD repeat-containing protein TBL1X (TBL1X) from Macaca fascicularis (Crab-eating macaque).